We begin with the raw amino-acid sequence, 144 residues long: Small polypeptide DEVIL 15 (144 aa).

Asn-8 carries N-linked (GlcNAc...) asparagine glycosylation. The disordered stretch occupies residues 22–63; the sequence is SSSSKPFFTRSFSTKTSSSPSSKSHFTRSFSTKPSSSSSSSD. The helical transmembrane segment at 104 to 120 threads the bilayer; that stretch reads ILSKKGASVTGKCFKVA. Positions 111 to 142 are required for DVL/RTFL small polypeptide activity; that stretch reads SVTGKCFKVAKEHKSRFYIIKRCVLMLVCWHK.

Belongs to the DVL/RTFL small polypeptides family.

It localises to the cell membrane. Functionally, small polypeptide acting as a regulatory molecule which coordinates cellular responses required for differentiation, growth and development, probably by restricting polar cell proliferation in lateral organs and coordinating socket cell recruitment and differentiation at trichome sites. In Arabidopsis thaliana (Mouse-ear cress), this protein is Small polypeptide DEVIL 15.